The sequence spans 221 residues: Ribosomal RNA large subunit methyltransferase E (221 aa).

Gly-60, Trp-62, Asp-89, Asp-105, and Asp-134 together coordinate S-adenosyl-L-methionine. The active-site Proton acceptor is Lys-174. A disordered region spans residues 199–221 (KPKASRDKSSETFLLGRQLKHPG).

This sequence belongs to the class I-like SAM-binding methyltransferase superfamily. RNA methyltransferase RlmE family.

The protein resides in the cytoplasm. The catalysed reaction is uridine(2552) in 23S rRNA + S-adenosyl-L-methionine = 2'-O-methyluridine(2552) in 23S rRNA + S-adenosyl-L-homocysteine + H(+). Functionally, specifically methylates the uridine in position 2552 of 23S rRNA at the 2'-O position of the ribose in the fully assembled 50S ribosomal subunit. The sequence is that of Ribosomal RNA large subunit methyltransferase E from Ralstonia pickettii (strain 12J).